Here is a 112-residue protein sequence, read N- to C-terminus: Large ribosomal subunit protein uL22 (112 aa).

It belongs to the universal ribosomal protein uL22 family. As to quaternary structure, part of the 50S ribosomal subunit.

Functionally, this protein binds specifically to 23S rRNA; its binding is stimulated by other ribosomal proteins, e.g. L4, L17, and L20. It is important during the early stages of 50S assembly. It makes multiple contacts with different domains of the 23S rRNA in the assembled 50S subunit and ribosome. Its function is as follows. The globular domain of the protein is located near the polypeptide exit tunnel on the outside of the subunit, while an extended beta-hairpin is found that lines the wall of the exit tunnel in the center of the 70S ribosome. The chain is Large ribosomal subunit protein uL22 from Mesoplasma florum (strain ATCC 33453 / NBRC 100688 / NCTC 11704 / L1) (Acholeplasma florum).